The primary structure comprises 236 residues: Ribosomal RNA large subunit methyltransferase E (236 aa).

Residues G76, W78, D99, D115, and D140 each coordinate S-adenosyl-L-methionine. K180 acts as the Proton acceptor in catalysis.

The protein belongs to the class I-like SAM-binding methyltransferase superfamily. RNA methyltransferase RlmE family.

It is found in the cytoplasm. It carries out the reaction uridine(2552) in 23S rRNA + S-adenosyl-L-methionine = 2'-O-methyluridine(2552) in 23S rRNA + S-adenosyl-L-homocysteine + H(+). Its function is as follows. Specifically methylates the uridine in position 2552 of 23S rRNA at the 2'-O position of the ribose in the fully assembled 50S ribosomal subunit. The chain is Ribosomal RNA large subunit methyltransferase E from Rhodopseudomonas palustris (strain HaA2).